Reading from the N-terminus, the 115-residue chain is Meromycolate extension acyl carrier protein (115 aa).

Residues 3 to 81 enclose the Carrier domain; the sequence is VTQEEIIAGI…DVVAYIQKLE (79 aa). O-(pantetheine 4'-phosphoryl)serine is present on serine 41.

This sequence belongs to the acyl carrier protein (ACP) family. In terms of processing, 4'-phosphopantetheine is transferred from CoA to a specific serine of apo-AcpM.

Its subcellular location is the cytoplasm. In terms of biological role, acyl carrier protein involved in meromycolate extension. In Mycobacterium bovis (strain ATCC BAA-935 / AF2122/97), this protein is Meromycolate extension acyl carrier protein (acpM).